Reading from the N-terminus, the 217-residue chain is Small ribosomal subunit protein uS3c (217 aa).

In terms of domain architecture, KH type-2 spans 46–117 (VQKHIKNSSN…RLRMTLIEIA (72 aa)).

It belongs to the universal ribosomal protein uS3 family. Part of the 30S ribosomal subunit.

The protein resides in the plastid. Its subcellular location is the chloroplast. This Marchantia polymorpha (Common liverwort) protein is Small ribosomal subunit protein uS3c (rps3).